We begin with the raw amino-acid sequence, 201 residues long: Glutathione peroxidase 1 (201 aa).

Serine 32 is subject to Phosphoserine. Selenocysteine 47 is an active-site residue. A non-standard amino acid (selenocysteine) is located at residue selenocysteine 47. Lysine 86, lysine 112, and lysine 146 each carry N6-acetyllysine; alternate. Residues lysine 86, lysine 112, and lysine 146 each carry the N6-succinyllysine; alternate modification. Residues serine 195 and serine 199 each carry the phosphoserine modification.

This sequence belongs to the glutathione peroxidase family. In terms of assembly, homotetramer. Interacts with MIEN1. Post-translationally, during periods of oxidative stress, Sec-47 may react with a superoxide radical, irreversibly lose hydroselenide and be converted to dehydroalanine.

It localises to the cytoplasm. Its subcellular location is the mitochondrion. The catalysed reaction is 2 glutathione + H2O2 = glutathione disulfide + 2 H2O. The enzyme catalyses a hydroperoxy polyunsaturated fatty acid + 2 glutathione = a hydroxy polyunsaturated fatty acid + glutathione disulfide + H2O. It catalyses the reaction tert-butyl hydroperoxide + 2 glutathione = tert-butanol + glutathione disulfide + H2O. It carries out the reaction cumene hydroperoxide + 2 glutathione = 2-phenylpropan-2-ol + glutathione disulfide + H2O. The catalysed reaction is (13S)-hydroperoxy-(9Z,11E)-octadecadienoate + 2 glutathione = (13S)-hydroxy-(9Z,11E)-octadecadienoate + glutathione disulfide + H2O. The enzyme catalyses (9S)-hydroperoxy-(10E,12Z)-octadecadienoate + 2 glutathione = (9S)-hydroxy-(10E,12Z)-octadecadienoate + glutathione disulfide + H2O. It catalyses the reaction (5S)-hydroperoxy-(6E,8Z,11Z,14Z)-eicosatetraenoate + 2 glutathione = (5S)-hydroxy-(6E,8Z,11Z,14Z)-eicosatetraenoate + glutathione disulfide + H2O. It carries out the reaction (12S)-hydroperoxy-(5Z,8Z,10E,14Z)-eicosatetraenoate + 2 glutathione = (12S)-hydroxy-(5Z,8Z,10E,14Z)-eicosatetraenoate + glutathione disulfide + H2O. The catalysed reaction is (12R)-hydroperoxy-(5Z,8Z,10E,14Z)-eicosatetraenoate + 2 glutathione = (12R)-hydroxy-(5Z,8Z,10E,14Z)-eicosatetraenoate + glutathione disulfide + H2O. The enzyme catalyses (15S)-hydroperoxy-(5Z,8Z,11Z,13E)-eicosatetraenoate + 2 glutathione = (15S)-hydroxy-(5Z,8Z,11Z,13E)-eicosatetraenoate + glutathione disulfide + H2O. It catalyses the reaction (5S)-hydroperoxy-(6E,8Z,11Z,14Z,17Z)-eicosapentaenoate + 2 glutathione = (5S)-hydroxy-(6E,8Z,11Z,14Z,17Z)-eicosapentaenoate + glutathione disulfide + H2O. It carries out the reaction (12S)-hydroperoxy-(5Z,8Z,10E,14Z,17Z)-eicosapentaenoate + 2 glutathione = (12S)-hydroxy-(5Z,8Z,10E,14Z,17Z)-eicosapentaenoate + glutathione disulfide + H2O. The catalysed reaction is (15S)-hydroperoxy-(5Z,8Z,11Z,13E,17Z)-eicosapentaenoate + 2 glutathione = (15S)-hydroxy-(5Z,8Z,11Z,13E,17Z)-eicosapentaenoate + glutathione disulfide + H2O. The enzyme catalyses (15S)-hydroperoxy-(11Z,13E)-eicosadienoate + 2 glutathione = (15S)-hydroxy-(11Z,13E)-eicosadienoate + glutathione disulfide + H2O. It catalyses the reaction (17S)-hydroperoxy-(4Z,7Z,10Z,13Z,15E,19Z)-docosahexaenoate + 2 glutathione = (17S)-hydroxy-(4Z,7Z,10Z,13Z,15E,19Z)-docosahexaenoate + glutathione disulfide + H2O. Catalyzes the reduction of hydroperoxides in a glutathione-dependent manner thus regulating cellular redox homeostasis. Can reduce small soluble hydroperoxides such as H2O2, cumene hydroperoxide and tert-butyl hydroperoxide, as well as several fatty acid-derived hydroperoxides. In platelets catalyzes the reduction of 12-hydroperoxyeicosatetraenoic acid, the primary product of the arachidonate 12-lipoxygenase pathway. This is Glutathione peroxidase 1 (GPX1) from Pongo pygmaeus (Bornean orangutan).